We begin with the raw amino-acid sequence, 1180 residues long: Chitin synthase 6 (1180 aa).

Transmembrane regions (helical) follow at residues 108-128 and 374-394; these read FTICAIIFWLCAIILFYIIAF and LLLAFSVLLVTTVLAKFIAAL. Asn737 carries N-linked (GlcNAc...) asparagine glycosylation. 3 consecutive transmembrane segments (helical) span residues 762–782, 795–815, and 822–842; these read FIVFIDLLGTVILPATAVYLV, IPYISIAMIAAVYGLQAILFL, and YIGWLVIYILAYPVFSFFLPI. Positions 1118–1175 constitute a DEK-C domain; sequence DPTDEEIKSAVQTYLANQPSLMNVTKRSVREALVAAFPNAELSYKKSMINKAIDDTLS.

It belongs to the chitin synthase family. Class V subfamily.

Its subcellular location is the cell membrane. The protein resides in the cytoplasmic vesicle membrane. It carries out the reaction [(1-&gt;4)-N-acetyl-beta-D-glucosaminyl](n) + UDP-N-acetyl-alpha-D-glucosamine = [(1-&gt;4)-N-acetyl-beta-D-glucosaminyl](n+1) + UDP + H(+). Polymerizes chitin, a structural polymer of the cell wall and septum, by transferring the sugar moiety of UDP-GlcNAc to the non-reducing end of the growing chitin polymer. Plays a crucial role during infection and allows the fungus to overcome the resistance of the plant that checks growth of the pathogen and eventually eliminates it. The chain is Chitin synthase 6 from Mycosarcoma maydis (Corn smut fungus).